A 67-amino-acid polypeptide reads, in one-letter code: ATP synthase F(0) complex subunit 8 (67 aa).

Residues 8-24 (TWFINIVSMILTLFIVF) traverse the membrane as a helical segment. Lysine 54 bears the N6-acetyllysine; alternate mark. N6-succinyllysine; alternate is present on lysine 54. Lysine 57 is subject to N6-acetyllysine.

Belongs to the ATPase protein 8 family. In terms of assembly, component of the ATP synthase complex composed at least of ATP5F1A/subunit alpha, ATP5F1B/subunit beta, ATP5MC1/subunit c (homooctomer), MT-ATP6/subunit a, MT-ATP8/subunit 8, ATP5ME/subunit e, ATP5MF/subunit f, ATP5MG/subunit g, ATP5MK/subunit k, ATP5MJ/subunit j, ATP5F1C/subunit gamma, ATP5F1D/subunit delta, ATP5F1E/subunit epsilon, ATP5PF/subunit F6, ATP5PB/subunit b, ATP5PD/subunit d, ATP5PO/subunit OSCP. ATP synthase complex consists of a soluble F(1) head domain (subunits alpha(3) and beta(3)) - the catalytic core - and a membrane F(0) domain - the membrane proton channel (subunits c, a, 8, e, f, g, k and j). These two domains are linked by a central stalk (subunits gamma, delta, and epsilon) rotating inside the F1 region and a stationary peripheral stalk (subunits F6, b, d, and OSCP). Interacts with PRICKLE3.

The protein resides in the mitochondrion membrane. Functionally, subunit 8, of the mitochondrial membrane ATP synthase complex (F(1)F(0) ATP synthase or Complex V) that produces ATP from ADP in the presence of a proton gradient across the membrane which is generated by electron transport complexes of the respiratory chain. ATP synthase complex consist of a soluble F(1) head domain - the catalytic core - and a membrane F(1) domain - the membrane proton channel. These two domains are linked by a central stalk rotating inside the F(1) region and a stationary peripheral stalk. During catalysis, ATP synthesis in the catalytic domain of F(1) is coupled via a rotary mechanism of the central stalk subunits to proton translocation. In vivo, can only synthesize ATP although its ATP hydrolase activity can be activated artificially in vitro. Part of the complex F(0) domain. This chain is ATP synthase F(0) complex subunit 8, found in Equus caballus (Horse).